A 141-amino-acid chain; its full sequence is MKLVESNDTVDFPDGVTFTVKNRVVHVTGPRGTLKRDFRHLHMEMERVGKNQLRVRKWFGVRKEIAAIRTVCSHIQNMIKGVTKGFRYKMRSVYAHFPINVTLQDGGRTVEIRNFLGEKIVRPVPLRMCHCHVVHFTRTLD.

The protein belongs to the universal ribosomal protein uL6 family.

The protein is Large ribosomal subunit protein uL6 of Haemonchus contortus (Barber pole worm).